We begin with the raw amino-acid sequence, 206 residues long: Fibroblast growth factor 4 (206 aa).

Positions 1-30 (MSGPGTAAVALLPAVLLALLAPWAGRGGAA) are cleaved as a signal peptide.

The protein belongs to the heparin-binding growth factors family. As to quaternary structure, interacts with FGFR1, FGFR2, FGFR3 and FGFR4. Affinity between fibroblast growth factors (FGFs) and their receptors is increased by heparan sulfate glycosaminoglycans that function as coreceptors.

The protein localises to the secreted. Functionally, plays an important role in the regulation of embryonic development, cell proliferation, and cell differentiation. Required for normal limb and cardiac valve development during embryogenesis. May play a role in embryonic molar tooth bud development via inducing the expression of MSX1, MSX2 and MSX1-mediated expression of SDC1 in dental mesenchyme cells. The chain is Fibroblast growth factor 4 from Homo sapiens (Human).